Here is a 371-residue protein sequence, read N- to C-terminus: MSSIFKEGIYDTGSYARTGTLDLNGIQIQTPIFMPVGTRGSIKSLTSEDIDELGYNLILANTYHLYLKPGKEVFDHFQGLKNFMSYKKALLTDSGGFQVFSLASLFKFEDDGVRFQSHIDGSHHKFTPASVIDMQRSIGSDIMMVLDDCAPYGSDTKRLELALDRTHRWAKESFAYWMENPGGQNVFPIVQGGVNETLRLRSLETLQKIDFPGIAIGGLSVGEPRPEYIRILECMAPHLDKSRPRYLMGVGTVVDILEGVKNGIDMFDCVLPTRNARNGQVFTSKGKINLRNESHRLSDSPIDPQCECKVCKTYSLGYIRHLHKVKELTAFSLSTYHNLFFMQSFMEKMRKSIEIGNFQGFYDHWKNLFGS.

The Proton acceptor role is filled by Asp-93. Residues Asp-93–Phe-97, Asp-147, Gln-191, and Gly-218 contribute to the substrate site. Residues Gly-249 to Asp-255 form an RNA binding region. Catalysis depends on Asp-268, which acts as the Nucleophile. The tract at residues Thr-273–Arg-277 is RNA binding; important for wobble base 34 recognition. Zn(2+) is bound by residues Cys-306, Cys-308, Cys-311, and His-337.

Belongs to the queuine tRNA-ribosyltransferase family. Homodimer. Within each dimer, one monomer is responsible for RNA recognition and catalysis, while the other monomer binds to the replacement base PreQ1. The cofactor is Zn(2+).

It carries out the reaction 7-aminomethyl-7-carbaguanine + guanosine(34) in tRNA = 7-aminomethyl-7-carbaguanosine(34) in tRNA + guanine. It functions in the pathway tRNA modification; tRNA-queuosine biosynthesis. Catalyzes the base-exchange of a guanine (G) residue with the queuine precursor 7-aminomethyl-7-deazaguanine (PreQ1) at position 34 (anticodon wobble position) in tRNAs with GU(N) anticodons (tRNA-Asp, -Asn, -His and -Tyr). Catalysis occurs through a double-displacement mechanism. The nucleophile active site attacks the C1' of nucleotide 34 to detach the guanine base from the RNA, forming a covalent enzyme-RNA intermediate. The proton acceptor active site deprotonates the incoming PreQ1, allowing a nucleophilic attack on the C1' of the ribose to form the product. After dissociation, two additional enzymatic reactions on the tRNA convert PreQ1 to queuine (Q), resulting in the hypermodified nucleoside queuosine (7-(((4,5-cis-dihydroxy-2-cyclopenten-1-yl)amino)methyl)-7-deazaguanosine). The protein is Queuine tRNA-ribosyltransferase of Leptospira biflexa serovar Patoc (strain Patoc 1 / Ames).